Here is a 529-residue protein sequence, read N- to C-terminus: Type I restriction enzyme StySPI methylase subunit (529 aa).

Residues 148 to 153, 178 to 180, and Glu-216 contribute to the S-adenosyl-L-methionine site; these read QYFTPR and TAG. A disordered region spans residues 424–443; it reads AEESEVADSEENKNADQHQA.

Belongs to the N(4)/N(6)-methyltransferase family. The type I restriction/modification system is composed of three polypeptides R, M and S; the restriction enzyme has stoichiometry R(2)M(2)S(1) while the methyltransferase is M(2)S(1).

It catalyses the reaction a 2'-deoxyadenosine in DNA + S-adenosyl-L-methionine = an N(6)-methyl-2'-deoxyadenosine in DNA + S-adenosyl-L-homocysteine + H(+). Functionally, the subtype gamma methyltransferase (M) subunit of a type I restriction enzyme. The M and S subunits together form a methyltransferase (MTase) that methylates A-2 on the top strand and A-3 on the bottom strand of the sequence 5'-AACN(6)GTRC-3'. In the presence of the R subunit the complex can also act as an endonuclease, binding to the same target sequence but cutting the DNA some distance from this site. Whether the DNA is cut or modified depends on the methylation state of the target sequence. When the target site is unmodified, the DNA is cut. When the target site is hemimethylated, the complex acts as a maintenance MTase modifying the DNA so that both strands become methylated. After locating a non-methylated recognition site, the enzyme complex serves as a molecular motor that translocates DNA in an ATP-dependent manner until a collision occurs that triggers cleavage. In Salmonella potsdam, this protein is Type I restriction enzyme StySPI methylase subunit.